The primary structure comprises 317 residues: Metaxin-1 (317 aa).

Residues Lys38, Lys41, and Lys78 each participate in a glycyl lysine isopeptide (Lys-Gly) (interchain with G-Cter in ubiquitin) cross-link. Residues Glu164–Arg184 form a helical membrane-spanning segment.

This sequence belongs to the metaxin family. In terms of assembly, interacts with MTX2/metaxin-2. Associates with the mitochondrial contact site and cristae organizing system (MICOS) complex, composed of at least MICOS10/MIC10, CHCHD3/MIC19, CHCHD6/MIC25, APOOL/MIC27, IMMT/MIC60, APOO/MIC23/MIC26 and QIL1/MIC13. This complex was also known under the names MINOS or MitOS complex. The MICOS complex associates with mitochondrial outer membrane proteins SAMM50, MTX1 and MTX2 (together described as components of the mitochondrial outer membrane sorting assembly machinery (SAM) complex) and DNAJC11, mitochondrial inner membrane protein TMEM11 and with HSPA9. The MICOS and SAM complexes together with DNAJC11 are part of a large protein complex spanning both membranes termed the mitochondrial intermembrane space bridging (MIB) complex. Interacts with ARMC1. In terms of processing, ubiquitinated by PRKN during mitophagy, leading to its degradation and enhancement of mitophagy. Deubiquitinated by USP30.

Its subcellular location is the mitochondrion outer membrane. Functionally, involved in transport of proteins into the mitochondrion. Essential for embryonic development. This chain is Metaxin-1 (MTX1), found in Macaca fascicularis (Crab-eating macaque).